The sequence spans 126 residues: Methylglyoxal synthase (126 aa).

An MGS-like domain is found at 1 to 126 (MAERQKIALI…ADRLLPVITE (126 aa)). Substrate is bound by residues histidine 12, lysine 16, 38-41 (TGTT), and 59-60 (SG). Catalysis depends on aspartate 65, which acts as the Proton donor/acceptor. Histidine 92 provides a ligand contact to substrate.

It belongs to the methylglyoxal synthase family.

It carries out the reaction dihydroxyacetone phosphate = methylglyoxal + phosphate. Functionally, catalyzes the formation of methylglyoxal from dihydroxyacetone phosphate. The protein is Methylglyoxal synthase of Allorhizobium ampelinum (strain ATCC BAA-846 / DSM 112012 / S4) (Agrobacterium vitis (strain S4)).